The chain runs to 1793 residues: Transposon Ty1-H Gag-Pol polyprotein (1793 aa).

3 stretches are compositionally biased toward polar residues: residues 1-10 (MESQQLSNYP), 48-60 (TKAN…TPAS), and 127-152 (QSQF…GNTF). Disordered stretches follow at residues 1-84 (MESQ…QNGP), 126-174 (PQSQ…PPPM), and 390-459 (GSRN…SKST). Residues 153 to 165 (TDSSSADSDMTST) show a composition bias toward low complexity. Residues 337–439 (NNGIHINNKV…NSKSKTARAH (103 aa)) are RNA-binding. Low complexity predominate over residues 440–456 (NVSTSNNSPSTDNDSIS). The active-site For protease activity; shared with dimeric partner is aspartate 499. Residues 621–678 (NVHTSESTRKYPYPFIHRMLAHANAQTIRYSLKNNTITYFNESDVDWSSAIDYQCPDC) form an integrase-type zinc finger-like region. Residues 698–873 (NSYEPFQYLH…AGLDISTLLP (176 aa)) enclose the Integrase catalytic domain. Residues aspartate 709 and aspartate 774 each coordinate Mg(2+). A disordered region spans residues 996–1208 (AVSPTDSTPP…SSLGGIGDSN (213 aa)). A compositionally biased stretch (low complexity) spans 998-1007 (SPTDSTPPST). Over residues 1043–1053 (STPQISDIEST) the composition is skewed to polar residues. A compositionally biased stretch (basic and acidic residues) spans 1076–1091 (ESSHASKSKDFRHSDS). 2 stretches are compositionally biased toward polar residues: residues 1092–1120 (YSDN…QTSE) and 1133–1144 (SIDTSSSESNSL). Positions 1216 to 1250 (KKRSLEDNETEIKVSRDTWNTKNMRSLEPPRSKKR) match the Bipartite nuclear localization signal motif. The Reverse transcriptase Ty1/copia-type domain occupies 1376 to 1514 (NNYYITQLDI…DILGLEIKYQ (139 aa)). Mg(2+) is bound by residues aspartate 1384, aspartate 1465, aspartate 1466, aspartate 1648, glutamate 1690, and aspartate 1723. One can recognise an RNase H Ty1/copia-type domain in the interval 1648-1790 (DASYGNQPYY…IKTFKLLTNK (143 aa)).

In terms of assembly, the capsid protein forms a homotrimer, from which the VLPs are assembled. The protease is a homodimer, whose active site consists of two apposed aspartic acid residues. In terms of processing, initially, virus-like particles (VLPs) are composed of the structural unprocessed proteins Gag and Gag-Pol, and also contain the host initiator methionine tRNA (tRNA(i)-Met) which serves as a primer for minus-strand DNA synthesis, and a dimer of genomic Ty RNA. Processing of the polyproteins occurs within the particle and proceeds by an ordered pathway, called maturation. First, the protease (PR) is released by autocatalytic cleavage of the Gag-Pol polyprotein yielding capsid protein p45 and a Pol-p154 precursor protein. This cleavage is a prerequisite for subsequent processing of Pol-p154 at the remaining sites to release the mature structural and catalytic proteins. Maturation takes place prior to the RT reaction and is required to produce transposition-competent VLPs.

Its subcellular location is the cytoplasm. It localises to the nucleus. It catalyses the reaction DNA(n) + a 2'-deoxyribonucleoside 5'-triphosphate = DNA(n+1) + diphosphate. It carries out the reaction Endonucleolytic cleavage to 5'-phosphomonoester.. In terms of biological role, capsid protein (CA) is the structural component of the virus-like particle (VLP), forming the shell that encapsulates the retrotransposons dimeric RNA genome. The particles are assembled from trimer-clustered units and there are holes in the capsid shells that allow for the diffusion of macromolecules. CA also has nucleocapsid-like chaperone activity, promoting primer tRNA(i)-Met annealing to the multipartite primer-binding site (PBS), dimerization of Ty1 RNA and initiation of reverse transcription. Its function is as follows. The aspartyl protease (PR) mediates the proteolytic cleavages of the Gag and Gag-Pol polyproteins after assembly of the VLP. Functionally, reverse transcriptase/ribonuclease H (RT) is a multifunctional enzyme that catalyzes the conversion of the retro-elements RNA genome into dsDNA within the VLP. The enzyme displays a DNA polymerase activity that can copy either DNA or RNA templates, and a ribonuclease H (RNase H) activity that cleaves the RNA strand of RNA-DNA heteroduplexes during plus-strand synthesis and hydrolyzes RNA primers. The conversion leads to a linear dsDNA copy of the retrotransposon that includes long terminal repeats (LTRs) at both ends. Integrase (IN) targets the VLP to the nucleus, where a subparticle preintegration complex (PIC) containing at least integrase and the newly synthesized dsDNA copy of the retrotransposon must transit the nuclear membrane. Once in the nucleus, integrase performs the integration of the dsDNA into the host genome. The chain is Transposon Ty1-H Gag-Pol polyprotein (TY1B-H) from Saccharomyces cerevisiae (strain ATCC 204508 / S288c) (Baker's yeast).